The following is a 1000-amino-acid chain: Chromosome transmission fidelity protein 18 homolog (1000 aa).

Disordered regions lie at residues 53 to 89 (SAGDPIRSNANSKPTGDSNGEALACIDTSKSKKRDAS), 130 to 159 (AGNSTALSDDITPPPSPNHSPKKNERDSKF), and 272 to 301 (EFGENDSEILENDDNAGEEDDEDEPSSHSL). Residues 60 to 70 (SNANSKPTGDS) are compositionally biased toward polar residues. Acidic residues predominate over residues 272–295 (EFGENDSEILENDDNAGEEDDEDE). Residue 396–403 (GPPGLGKT) participates in ATP binding. Polar residues predominate over residues 888–898 (ARNAGRDNTTA). The interval 888–916 (ARNAGRDNTTAAAAVKTADPKGAKSAAKP) is disordered.

This sequence belongs to the activator 1 small subunits family. CTF18 subfamily. In terms of assembly, component of the CTF18-RFC complex, which consists of ctf18, ctf8, dcc1, rfc2, rfc3, rfc4 and rfc5. The CTF18-RFC complex associates with pcna.

The protein localises to the nucleus. In terms of biological role, chromosome cohesion factor involved in sister chromatid cohesion and fidelity of chromosome transmission. Component of one of the cell nuclear antigen loader complexes, CTF18-replication factor C (CTF18-RFC), which consists of ctf18, ctf8, dcc1, rfc2, rfc3, rfc4 and rfc5. The CTF18-RFC complex binds to single-stranded and primed DNAs and has weak ATPase activity that is stimulated by the presence of primed DNA, replication protein A (RPA) and by proliferating cell nuclear antigen (pcna). The CTF18-RFC complex catalyzes the ATP-dependent loading of pcna onto primed and gapped DNA. The chain is Chromosome transmission fidelity protein 18 homolog (chtf18) from Xenopus laevis (African clawed frog).